The primary structure comprises 447 residues: Na(+)-translocating NADH-quinone reductase subunit A (447 aa).

Belongs to the NqrA family. Composed of six subunits; NqrA, NqrB, NqrC, NqrD, NqrE and NqrF.

It catalyses the reaction a ubiquinone + n Na(+)(in) + NADH + H(+) = a ubiquinol + n Na(+)(out) + NAD(+). Functionally, NQR complex catalyzes the reduction of ubiquinone-1 to ubiquinol by two successive reactions, coupled with the transport of Na(+) ions from the cytoplasm to the periplasm. NqrA to NqrE are probably involved in the second step, the conversion of ubisemiquinone to ubiquinol. This is Na(+)-translocating NADH-quinone reductase subunit A from Photorhabdus laumondii subsp. laumondii (strain DSM 15139 / CIP 105565 / TT01) (Photorhabdus luminescens subsp. laumondii).